A 493-amino-acid polypeptide reads, in one-letter code: Protein dml1 (493 aa).

It belongs to the misato family.

The protein localises to the mitochondrion. Its function is as follows. Involved in the partitioning of the mitochondrial organelle and mitochondrial DNA (mtDNA) inheritance. In Aspergillus oryzae (strain ATCC 42149 / RIB 40) (Yellow koji mold), this protein is Protein dml1 (dml1).